The primary structure comprises 320 residues: Replication-associated protein ORF2 (320 aa).

Catalysis depends on O-(5'-phospho-DNA)-tyrosine intermediate residues Tyr-188 and Tyr-192.

This sequence belongs to the microviridae Rep protein family.

The catalysed reaction is ATP + (deoxyribonucleotide)n-3'-hydroxyl + 5'-phospho-(deoxyribonucleotide)m = (deoxyribonucleotide)n+m + AMP + diphosphate.. In terms of biological role, plays an essential role in viral DNA replication. Binds the origin of replication and cleaves the dsDNA replicative form I (RFI) and becomes covalently bound to it via phosphotyrosine bond, generating the dsDNA replicative form II (RFII). In turn, viral DNA replication initiates at the 3'-OH of the cleavage site. After one round of rolling circle synthesis, protein ORF2 is linked to the newly synthesized ssDNA and joins the ends of the displaced strand to generate a circular single-stranded molecule ready to be packed into a virion. The sequence is that of Replication-associated protein ORF2 from Spiroplasma virus 4 (SpV4).